Here is a 118-residue protein sequence, read N- to C-terminus: NAD(P)H-quinone oxidoreductase subunit M (118 aa).

Belongs to the complex I NdhM subunit family. In terms of assembly, NDH-1 can be composed of about 15 different subunits; different subcomplexes with different compositions have been identified which probably have different functions.

It localises to the cellular thylakoid membrane. The enzyme catalyses a plastoquinone + NADH + (n+1) H(+)(in) = a plastoquinol + NAD(+) + n H(+)(out). It catalyses the reaction a plastoquinone + NADPH + (n+1) H(+)(in) = a plastoquinol + NADP(+) + n H(+)(out). Its function is as follows. NDH-1 shuttles electrons from an unknown electron donor, via FMN and iron-sulfur (Fe-S) centers, to quinones in the respiratory and/or the photosynthetic chain. The immediate electron acceptor for the enzyme in this species is believed to be plastoquinone. Couples the redox reaction to proton translocation, and thus conserves the redox energy in a proton gradient. Cyanobacterial NDH-1 also plays a role in inorganic carbon-concentration. The sequence is that of NAD(P)H-quinone oxidoreductase subunit M from Trichormus variabilis (strain ATCC 29413 / PCC 7937) (Anabaena variabilis).